Here is a 272-residue protein sequence, read N- to C-terminus: Phosphoglycolate phosphatase (272 aa).

The active-site Nucleophile is aspartate 19. Mg(2+) is bound by residues aspartate 19, aspartate 21, and aspartate 182.

Belongs to the HAD-like hydrolase superfamily. CbbY/CbbZ/Gph/YieH family. Mg(2+) serves as cofactor.

The catalysed reaction is 2-phosphoglycolate + H2O = glycolate + phosphate. It participates in organic acid metabolism; glycolate biosynthesis; glycolate from 2-phosphoglycolate: step 1/1. In terms of biological role, specifically catalyzes the dephosphorylation of 2-phosphoglycolate. Is involved in the dissimilation of the intracellular 2-phosphoglycolate formed during the DNA repair of 3'-phosphoglycolate ends, a major class of DNA lesions induced by oxidative stress. This Pseudomonas fluorescens (strain Pf0-1) protein is Phosphoglycolate phosphatase.